A 363-amino-acid chain; its full sequence is MLEAVTNPKSSLATFSKQLNGLLQAKVVVCKSVNPYFNLALENYLYENSTAKHCLLLYTNSPSVIIGRNQNPWVEANVKLCRDNFVNIIRRKSGGGTVFHDFGNLNYSVLMNREEFSHTENASIMIQALRNLGVHARLNQRHDIVLAQSQRKISGSAYKISRNRCYHHGTMLLNSDLEGVREYLRSPSTGILSKGVSSTRSPVSNTKLLKAEFIKQVISCFLLHKSHSTTTKPLSKPRASSKRLYDIEPKSVITLEQNDLLGVPSILKAVNELQSWEWTFGQTPSFKQHLESTELSVSMDISVVHGRLEKVIFSTPNATLEHELSSIPWTGLCYESGFANTFLISGIHSKEAISILKWISDSI.

In terms of domain architecture, BPL/LPL catalytic spans 49-229 (STAKHCLLLY…CFLLHKSHST (181 aa)). Residues arginine 91, 96-99 (GTVF), and lysine 152 contribute to the ATP site. Lysine 152 contacts (R)-lipoate.

The protein belongs to the LplA family. Monomer.

It is found in the cytoplasm. It catalyses the reaction L-lysyl-[lipoyl-carrier protein] + (R)-lipoate + ATP = N(6)-[(R)-lipoyl]-L-lysyl-[lipoyl-carrier protein] + AMP + diphosphate + H(+). It participates in protein modification; protein lipoylation via exogenous pathway; protein N(6)-(lipoyl)lysine from lipoate: step 1/2. Its pathway is protein modification; protein lipoylation via exogenous pathway; protein N(6)-(lipoyl)lysine from lipoate: step 2/2. In terms of biological role, catalyzes both the ATP-dependent activation of exogenously supplied lipoate to lipoyl-AMP and the transfer of the activated lipoyl onto the lipoyl domains of lipoate-dependent enzymes. The chain is Putative lipoate-protein ligase A (aim22) from Schizosaccharomyces pombe (strain 972 / ATCC 24843) (Fission yeast).